A 542-amino-acid chain; its full sequence is Formate--tetrahydrofolate ligase (542 aa).

Position 53 to 60 (53 to 60 (TPAGEGKT)) interacts with ATP.

The protein belongs to the formate--tetrahydrofolate ligase family.

It catalyses the reaction (6S)-5,6,7,8-tetrahydrofolate + formate + ATP = (6R)-10-formyltetrahydrofolate + ADP + phosphate. Its pathway is one-carbon metabolism; tetrahydrofolate interconversion. The polypeptide is Formate--tetrahydrofolate ligase (Thermotoga petrophila (strain ATCC BAA-488 / DSM 13995 / JCM 10881 / RKU-1)).